A 513-amino-acid polypeptide reads, in one-letter code: Zinc finger CCCH-type with G patch domain-containing protein (513 aa).

A C3H1-type zinc finger spans residues 155 to 178 (PCSYYLEGECRFDEAKCRFSHGAL). 2 stretches are compositionally biased toward acidic residues: residues 252–261 (DQDEDDELSS) and 273–283 (SDEAESDMDDL). Residues 252–283 (DQDEDDELSSEESTSSMRDASSDEAESDMDDL) are disordered. One can recognise a G-patch domain in the interval 312–358 (TRGIGSKLMEKMGYIHGTGLGSEGRGIVTPVSAQILPQGRSLDACME). Disordered stretches follow at residues 411–430 (PGESTQQSEQVAKKAKNNEL) and 477–513 (QVQMQSHKQELATLQAQERSLSKEQQTRKSKNKMFEF). The segment covering 477 to 495 (QVQMQSHKQELATLQAQER) has biased composition (polar residues). Over residues 496–513 (SLSKEQQTRKSKNKMFEF) the composition is skewed to basic and acidic residues.

The protein resides in the nucleus. Functionally, transcription repressor. This chain is Zinc finger CCCH-type with G patch domain-containing protein, found in Drosophila sechellia (Fruit fly).